Consider the following 510-residue polypeptide: JmjC domain-containing histone demethylation protein 1 (510 aa).

The PHD-type zinc finger occupies P2–T53. In terms of domain architecture, JmjC spans T216–V365. T255 contacts substrate. Positions 258 and 260 each coordinate Fe cation. K275 provides a ligand contact to substrate. Position 333 (H333) interacts with Fe cation. Residues K475–F510 form a disordered region. A compositionally biased stretch (basic and acidic residues) spans E477 to F510.

This sequence belongs to the JHDM1 histone demethylase family. Fe(2+) serves as cofactor.

The protein localises to the nucleus. The catalysed reaction is N(6),N(6)-dimethyl-L-lysyl(36)-[histone H3] + 2 2-oxoglutarate + 2 O2 = L-lysyl(36)-[histone H3] + 2 formaldehyde + 2 succinate + 2 CO2. Histone demethylase that specifically demethylates 'Lys-36' of histone H3, thereby playing a central role in histone code. This is JmjC domain-containing histone demethylation protein 1 (JHD1) from Yarrowia lipolytica (strain CLIB 122 / E 150) (Yeast).